The following is an 85-amino-acid chain: MKITGGLLLLCTVVYFCSSSEAASLSPKKVDCSIYKKYPVVAIPCPITYLPVCGSDYITYGNECHLCTESLKSNGRVQFLHDGSC.

Residues 1-19 form the signal peptide; sequence MKITGGLLLLCTVVYFCSS. The Kazal-like domain occupies 26 to 85; sequence SPKKVDCSIYKKYPVVAIPCPITYLPVCGSDYITYGNECHLCTESLKSNGRVQFLHDGSC. Intrachain disulfides connect Cys-32-Cys-67, Cys-45-Cys-64, and Cys-53-Cys-85.

The protein localises to the secreted. Functionally, probable serine protease inhibitor. The polypeptide is Serine protease inhibitor Kazal-type 7 (SPINK7) (Homo sapiens (Human)).